Here is a 209-residue protein sequence, read N- to C-terminus: Translation initiation factor 2 subunit beta (209 aa).

The 59-residue stretch at 144–202 folds into the TRAM domain; the sequence is TIEEGKEYVVEITEVGSSGEGRTNYKGYTIFVPGAKRGETVKVRIKKVKNDVAIGEIIE.

Belongs to the eIF-2-beta/eIF-5 family. As to quaternary structure, heterotrimer composed of an alpha, a beta and a gamma chain.

EIF-2 functions in the early steps of protein synthesis by forming a ternary complex with GTP and initiator tRNA. The polypeptide is Translation initiation factor 2 subunit beta (eif2b) (Thermoplasma acidophilum (strain ATCC 25905 / DSM 1728 / JCM 9062 / NBRC 15155 / AMRC-C165)).